The sequence spans 29 residues: Dermaseptin-1 (29 aa).

The residue at position 29 (V29) is a Valine amide.

Expressed by the skin glands.

It localises to the secreted. Its function is as follows. Antimicrobial peptide, active against the Gram-positive bacterium S.aureus, the Gram-negative bacteria E.coli and P.aeruginosa, and the yeasts C.albicans and P.brasiliensis. Has hemolytic activity (40% hemolysis at 128 ug/ml). The polypeptide is Dermaseptin-1 (Phyllomedusa tarsius (Brownbelly leaf frog)).